The following is a 99-amino-acid chain: YcgL domain-containing protein HD_1373 (99 aa).

Positions 8–92 (NFCAIYKSMS…PAENLLKQFL (85 aa)) constitute a YcgL domain.

This Haemophilus ducreyi (strain 35000HP / ATCC 700724) protein is YcgL domain-containing protein HD_1373.